We begin with the raw amino-acid sequence, 154 residues long: NADPH-dependent 7-cyano-7-deazaguanine reductase (154 aa).

Residues 1-13 (MSVTDVSGLSQLG) are compositionally biased toward polar residues. The segment at 1 to 30 (MSVTDVSGLSQLGTKVDTPESPEKAVLEKV) is disordered. Basic and acidic residues predominate over residues 17-27 (DTPESPEKAVL). Cysteine 52 functions as the Thioimide intermediate in the catalytic mechanism. The active-site Proton donor is the aspartate 59. Substrate-binding positions include 74-76 (VES) and 93-94 (HE).

The protein belongs to the GTP cyclohydrolase I family. QueF type 1 subfamily.

It localises to the cytoplasm. The catalysed reaction is 7-aminomethyl-7-carbaguanine + 2 NADP(+) = 7-cyano-7-deazaguanine + 2 NADPH + 3 H(+). The protein operates within tRNA modification; tRNA-queuosine biosynthesis. Functionally, catalyzes the NADPH-dependent reduction of 7-cyano-7-deazaguanine (preQ0) to 7-aminomethyl-7-deazaguanine (preQ1). This Agrobacterium fabrum (strain C58 / ATCC 33970) (Agrobacterium tumefaciens (strain C58)) protein is NADPH-dependent 7-cyano-7-deazaguanine reductase.